The chain runs to 430 residues: Adenylosuccinate synthetase (430 aa).

GTP contacts are provided by residues 12 to 18 (GDEGKGK) and 40 to 42 (GHT). The active-site Proton acceptor is the Asp13. Residues Asp13 and Gly40 each coordinate Mg(2+). IMP contacts are provided by residues 13-16 (DEGK), 38-41 (NAGH), Thr128, Arg142, Gln223, Thr238, and Arg302. His41 serves as the catalytic Proton donor. 298–304 (TTTGRPR) contributes to the substrate binding site. Residues Arg304, 330-332 (SID), and 412-414 (SVG) contribute to the GTP site.

Belongs to the adenylosuccinate synthetase family. In terms of assembly, homodimer. Requires Mg(2+) as cofactor.

It localises to the cytoplasm. It catalyses the reaction IMP + L-aspartate + GTP = N(6)-(1,2-dicarboxyethyl)-AMP + GDP + phosphate + 2 H(+). The protein operates within purine metabolism; AMP biosynthesis via de novo pathway; AMP from IMP: step 1/2. Plays an important role in the de novo pathway of purine nucleotide biosynthesis. Catalyzes the first committed step in the biosynthesis of AMP from IMP. The chain is Adenylosuccinate synthetase from Streptococcus pyogenes serotype M4 (strain MGAS10750).